Here is a 184-residue protein sequence, read N- to C-terminus: Photosystem I assembly protein Ycf4 (184 aa).

2 helical membrane-spanning segments follow: residues 22–42 and 57–77; these read FCWACILFLGSLGFLLVGTSS and ILFFPQGIVMSFYGIAGLFIS.

It belongs to the Ycf4 family.

It is found in the plastid. The protein resides in the chloroplast thylakoid membrane. Functionally, seems to be required for the assembly of the photosystem I complex. The polypeptide is Photosystem I assembly protein Ycf4 (Chloranthus spicatus (Chulantree)).